We begin with the raw amino-acid sequence, 621 residues long: Probable serine/threonine-protein kinase WNK2 (621 aa).

The Protein kinase domain occupies 28–286 (GRYTEVLGKG…AQELLMDPFL (259 aa)). ATP is bound by residues 108-111 (TEVF) and lysine 158. Aspartate 175 serves as the catalytic Proton acceptor. Disordered regions lie at residues 438–490 (SVEN…SDSP), 501–520 (VEPH…NDTD), 527–553 (GTSV…SPQS), and 600–621 (HREE…SDKP).

The protein belongs to the protein kinase superfamily. Ser/Thr protein kinase family. WNK subfamily.

It carries out the reaction L-seryl-[protein] + ATP = O-phospho-L-seryl-[protein] + ADP + H(+). It catalyses the reaction L-threonyl-[protein] + ATP = O-phospho-L-threonyl-[protein] + ADP + H(+). This is Probable serine/threonine-protein kinase WNK2 (WNK2) from Oryza sativa subsp. japonica (Rice).